The sequence spans 438 residues: Adenosylhomocysteinase (438 aa).

Residues threonine 61, aspartate 137, and glutamate 162 each coordinate substrate. 163–165 (TTT) provides a ligand contact to NAD(+). Lysine 192 and aspartate 196 together coordinate substrate. NAD(+) contacts are provided by residues asparagine 197, 226 to 231 (GYGDVG), glutamate 249, asparagine 284, 305 to 307 (IGH), and asparagine 352.

This sequence belongs to the adenosylhomocysteinase family. NAD(+) is required as a cofactor.

Its subcellular location is the cytoplasm. It catalyses the reaction S-adenosyl-L-homocysteine + H2O = L-homocysteine + adenosine. It participates in amino-acid biosynthesis; L-homocysteine biosynthesis; L-homocysteine from S-adenosyl-L-homocysteine: step 1/1. Its function is as follows. May play a key role in the regulation of the intracellular concentration of adenosylhomocysteine. The polypeptide is Adenosylhomocysteinase (Flavobacterium johnsoniae (strain ATCC 17061 / DSM 2064 / JCM 8514 / BCRC 14874 / CCUG 350202 / NBRC 14942 / NCIMB 11054 / UW101) (Cytophaga johnsonae)).